The chain runs to 208 residues: ATP-dependent Clp protease proteolytic subunit (208 aa).

Residue serine 101 is the Nucleophile of the active site. Histidine 126 is an active-site residue.

It belongs to the peptidase S14 family. In terms of assembly, component of the chloroplastic Clp protease core complex.

It localises to the plastid. The protein localises to the chloroplast stroma. The catalysed reaction is Hydrolysis of proteins to small peptides in the presence of ATP and magnesium. alpha-casein is the usual test substrate. In the absence of ATP, only oligopeptides shorter than five residues are hydrolyzed (such as succinyl-Leu-Tyr-|-NHMec, and Leu-Tyr-Leu-|-Tyr-Trp, in which cleavage of the -Tyr-|-Leu- and -Tyr-|-Trp bonds also occurs).. Functionally, cleaves peptides in various proteins in a process that requires ATP hydrolysis. Has a chymotrypsin-like activity. Plays a major role in the degradation of misfolded proteins. The polypeptide is ATP-dependent Clp protease proteolytic subunit (Nephroselmis olivacea (Green alga)).